Here is a 190-residue protein sequence, read N- to C-terminus: Outer-membrane lipoprotein LolB (190 aa).

Positions Met-1 to Gly-16 are cleaved as a signal peptide. Cys-17 carries the N-palmitoyl cysteine lipid modification. Residue Cys-17 is the site of S-diacylglycerol cysteine attachment.

Belongs to the LolB family. Monomer.

Its subcellular location is the cell outer membrane. Functionally, plays a critical role in the incorporation of lipoproteins in the outer membrane after they are released by the LolA protein. The chain is Outer-membrane lipoprotein LolB from Dechloromonas aromatica (strain RCB).